Here is a 358-residue protein sequence, read N- to C-terminus: Uroporphyrinogen decarboxylase (358 aa).

Residues 29–33, F48, D79, Y155, S210, and H330 each bind substrate; that span reads RQAGR.

It belongs to the uroporphyrinogen decarboxylase family. In terms of assembly, homodimer.

The protein resides in the cytoplasm. It catalyses the reaction uroporphyrinogen III + 4 H(+) = coproporphyrinogen III + 4 CO2. It participates in porphyrin-containing compound metabolism; protoporphyrin-IX biosynthesis; coproporphyrinogen-III from 5-aminolevulinate: step 4/4. Functionally, catalyzes the decarboxylation of four acetate groups of uroporphyrinogen-III to yield coproporphyrinogen-III. The sequence is that of Uroporphyrinogen decarboxylase from Bordetella pertussis (strain Tohama I / ATCC BAA-589 / NCTC 13251).